A 497-amino-acid chain; its full sequence is Endoglucanase 17 (497 aa).

The signal sequence occupies residues 1–21 (MAAAGGAVLLLVLATATSVTG). The Nucleophile role is filled by Asp-77. Residue His-406 is part of the active site. Asn-451 is a glycosylation site (N-linked (GlcNAc...) asparagine). Residues Asp-458 and Glu-467 contribute to the active site.

The protein belongs to the glycosyl hydrolase 9 (cellulase E) family.

Its subcellular location is the secreted. The enzyme catalyses Endohydrolysis of (1-&gt;4)-beta-D-glucosidic linkages in cellulose, lichenin and cereal beta-D-glucans.. This Oryza sativa subsp. japonica (Rice) protein is Endoglucanase 17 (GLU13).